Consider the following 491-residue polypeptide: 3-octaprenyl-4-hydroxybenzoate carboxy-lyase (491 aa).

Position 176 (Asn-176) interacts with Mn(2+). Prenylated FMN-binding positions include 179 to 181 (IYR), 193 to 195 (RWL), and 198 to 199 (RG). Residue Glu-242 coordinates Mn(2+). The active-site Proton donor is the Asp-291.

This sequence belongs to the UbiD family. In terms of assembly, homohexamer. It depends on prenylated FMN as a cofactor. Mn(2+) serves as cofactor.

Its subcellular location is the cell membrane. The enzyme catalyses a 4-hydroxy-3-(all-trans-polyprenyl)benzoate + H(+) = a 2-(all-trans-polyprenyl)phenol + CO2. It participates in cofactor biosynthesis; ubiquinone biosynthesis. In terms of biological role, catalyzes the decarboxylation of 3-octaprenyl-4-hydroxy benzoate to 2-octaprenylphenol, an intermediate step in ubiquinone biosynthesis. This is 3-octaprenyl-4-hydroxybenzoate carboxy-lyase from Chromobacterium violaceum (strain ATCC 12472 / DSM 30191 / JCM 1249 / CCUG 213 / NBRC 12614 / NCIMB 9131 / NCTC 9757 / MK).